The sequence spans 296 residues: 33 kDa chaperonin (296 aa).

Intrachain disulfides connect Cys238–Cys240 and Cys271–Cys274.

Belongs to the HSP33 family. Post-translationally, under oxidizing conditions two disulfide bonds are formed involving the reactive cysteines. Under reducing conditions zinc is bound to the reactive cysteines and the protein is inactive.

It localises to the cytoplasm. Redox regulated molecular chaperone. Protects both thermally unfolding and oxidatively damaged proteins from irreversible aggregation. Plays an important role in the bacterial defense system toward oxidative stress. The sequence is that of 33 kDa chaperonin from Clostridium botulinum (strain 657 / Type Ba4).